The following is a 225-amino-acid chain: Leucyl/phenylalanyl-tRNA--protein transferase (225 aa).

Belongs to the L/F-transferase family.

It is found in the cytoplasm. It catalyses the reaction N-terminal L-lysyl-[protein] + L-leucyl-tRNA(Leu) = N-terminal L-leucyl-L-lysyl-[protein] + tRNA(Leu) + H(+). It carries out the reaction N-terminal L-arginyl-[protein] + L-leucyl-tRNA(Leu) = N-terminal L-leucyl-L-arginyl-[protein] + tRNA(Leu) + H(+). The enzyme catalyses L-phenylalanyl-tRNA(Phe) + an N-terminal L-alpha-aminoacyl-[protein] = an N-terminal L-phenylalanyl-L-alpha-aminoacyl-[protein] + tRNA(Phe). In terms of biological role, functions in the N-end rule pathway of protein degradation where it conjugates Leu, Phe and, less efficiently, Met from aminoacyl-tRNAs to the N-termini of proteins containing an N-terminal arginine or lysine. The polypeptide is Leucyl/phenylalanyl-tRNA--protein transferase (Rhodopseudomonas palustris (strain TIE-1)).